Reading from the N-terminus, the 436-residue chain is GTPase Der (436 aa).

2 consecutive EngA-type G domains span residues 4–167 (PVIA…PKIE) and 176–351 (IRFS…ESHS). GTP contacts are provided by residues 10–17 (GRPNVGKS), 57–61 (DTGGI), 119–122 (NKVD), 182–189 (GRPNVGKS), 229–233 (DTAGM), and 294–297 (NKWD). A KH-like domain is found at 352–436 (IRIQTNVLND…PIHIIARARD (85 aa)).

The protein belongs to the TRAFAC class TrmE-Era-EngA-EngB-Septin-like GTPase superfamily. EngA (Der) GTPase family. In terms of assembly, associates with the 50S ribosomal subunit.

Functionally, GTPase that plays an essential role in the late steps of ribosome biogenesis. The polypeptide is GTPase Der (Bacillus cereus (strain ATCC 10987 / NRS 248)).